The sequence spans 214 residues: Pyridoxine/pyridoxamine 5'-phosphate oxidase (214 aa).

Substrate-binding positions include 8–11 (RTNY) and Lys-66. FMN contacts are provided by residues 61-66 (RIVLIK), 76-77 (FT), Arg-82, Lys-83, and Gln-105. Substrate-binding residues include Tyr-123, Arg-127, and Ser-131. Residues 140 to 141 (QS) and Trp-184 contribute to the FMN site. 190 to 192 (RLH) lines the substrate pocket. An FMN-binding site is contributed by Arg-194.

This sequence belongs to the pyridoxamine 5'-phosphate oxidase family. In terms of assembly, homodimer. Requires FMN as cofactor.

The catalysed reaction is pyridoxamine 5'-phosphate + O2 + H2O = pyridoxal 5'-phosphate + H2O2 + NH4(+). The enzyme catalyses pyridoxine 5'-phosphate + O2 = pyridoxal 5'-phosphate + H2O2. It functions in the pathway cofactor metabolism; pyridoxal 5'-phosphate salvage; pyridoxal 5'-phosphate from pyridoxamine 5'-phosphate: step 1/1. The protein operates within cofactor metabolism; pyridoxal 5'-phosphate salvage; pyridoxal 5'-phosphate from pyridoxine 5'-phosphate: step 1/1. Catalyzes the oxidation of either pyridoxine 5'-phosphate (PNP) or pyridoxamine 5'-phosphate (PMP) into pyridoxal 5'-phosphate (PLP). This chain is Pyridoxine/pyridoxamine 5'-phosphate oxidase, found in Burkholderia mallei (strain NCTC 10247).